The following is a 1102-amino-acid chain: Endocytosis protein end4 (1102 aa).

The ENTH domain occupies 9-139; the sequence is DHMQSDASLM…SFHAQHPEFN (131 aa). The tract at residues 265–334 is disordered; that stretch reads PHDPPDLEGD…SEPEPIQDFW (70 aa). The segment covering 292–305 has biased composition (polar residues); that stretch reads TGASTIAPQPTGTS. A coiled-coil region spans residues 338–661; sequence TLDQQLAAQQ…ESLLQLSKLQ (324 aa). One can recognise an I/LWEQ domain in the interval 858-1100; sequence LLNAPGENIE…DMRKTSYHVA (243 aa).

Belongs to the SLA2 family.

The protein resides in the cytoplasm. The protein localises to the cytoskeleton. Its function is as follows. Required for cellular morphogenesis and polarization of the cortical cytoskeleton. Required for establishment of new polarized growth zones where it acts in actin organization. Involved plasma membrane internalization and is essential for fluid-phase endocytosis. The sequence is that of Endocytosis protein end4 (end4) from Schizosaccharomyces pombe (strain 972 / ATCC 24843) (Fission yeast).